Reading from the N-terminus, the 502-residue chain is Zinc finger C3HC-type protein 1 (502 aa).

Position 2 is an N-acetylalanine (Ala2). Ser24 is subject to Phosphoserine. At Thr28 the chain carries Phosphothreonine. The tract at residues 36–73 is disordered; sequence IDEGIAPEEGGVDAKDTSATSQSVNGSPQAEQPSLEST. Over residues 52-72 the composition is skewed to polar residues; sequence TSATSQSVNGSPQAEQPSLES. Phosphoserine occurs at positions 58 and 62. Thr84 carries the post-translational modification Phosphothreonine. The C3HC-type zinc finger occupies 102-156; sequence CAKYGWVTVECDMLKCSSCQAFLCASLQPAFDFDRYKQRCAELKKALCTAHEKFC. Residues 170–210 form an F-box-like region; sequence LPLDEPAILVSEFLDRFQSLCHLDLQLPSLRPEDLKTMCLT. Residues 302 to 423 are disordered; sequence SSPIPGLEGR…SSRSFFDPTS (122 aa). 2 positions are modified to phosphoserine: Ser321 and Ser329. Polar residues predominate over residues 327-338; sequence TRSQDATFSPGS. The residue at position 333 (Thr333) is a Phosphothreonine. Residues Ser335, Ser338, Ser344, Ser354, Ser359, and Ser370 each carry the phosphoserine modification. A compositionally biased stretch (polar residues) spans 351-360; the sequence is RTRSWDSSSP. Positions 371 to 380 are enriched in low complexity; sequence PTTRTRPVTR. Position 381 is a phosphoserine (Ser381). Phosphothreonine occurs at positions 384 and 387. Residue Ser395 is modified to Phosphoserine. Residues 396-402 carry the Nuclear localization signal motif; that stretch reads PLRKAKR. Phosphoserine is present on residues Ser407 and Ser483. A compositionally biased stretch (low complexity) spans 407-422; sequence SSSSSDTSSRSFFDPT.

As to quaternary structure, interacts with TPR; this interaction mediates ZC3HC1 nuclear envelopes (NE)-association but also required for proper positioning of a substantial amount of TPR at the nuclear basket (NB). In terms of processing, phosphorylated. May also be weakly phosphorylated on Tyr residues. Widely expressed. Highly expressed in heart, skeletal muscle and testis. Expressed in brain, placenta, lung, kidney, liver, pancreas, spleen, thymus, prostate, ovary small intestine and colon. Weakly or not expressed in leukocytes.

The protein resides in the nucleus. It is found in the nucleus envelope. Functionally, required for proper positioning of a substantial amount of TPR at the nuclear basket (NB) through interaction with TPR. In Homo sapiens (Human), this protein is Zinc finger C3HC-type protein 1.